The sequence spans 327 residues: Movement protein (327 aa).

A coiled-coil region spans residues 297 to 327; sequence SASSSNTENELARVSQNIDLLKNKLKEICGE.

It belongs to the caulimoviridae movement protein family. In terms of assembly, homotrimer, through the coiled-coil domain. Interacts with VAP. May interact (via N-terminus) with host prenylated Rab acceptor protein 1D (PRA1D).

The protein resides in the host cell junction. Its subcellular location is the host plasmodesma. Transports viral genome to neighboring plant cells directly through plasmosdesmata, without any budding. The movement protein allows efficient cell to cell propagation, by bypassing the host cell wall barrier. Acts by forming tubules structures that increase the size exclusion limit (SEL) of plasmodesmata, thereby allowing viral ribonucleocapsids to spread directly to neighboring cells. This Cauliflower mosaic virus (strain CM-1841) (CaMV) protein is Movement protein.